A 199-amino-acid chain; its full sequence is Glycerol-3-phosphate acyltransferase (199 aa).

The next 5 helical transmembrane spans lie at 4–24 (LVSV…FLMG), 51–71 (WAAL…AYLG), 77–97 (EWGF…PVWL), 111–131 (VMLL…ALAV), and 152–172 (LFLL…AVVI).

It belongs to the PlsY family. Probably interacts with PlsX.

The protein resides in the cell membrane. It carries out the reaction an acyl phosphate + sn-glycerol 3-phosphate = a 1-acyl-sn-glycero-3-phosphate + phosphate. It participates in lipid metabolism; phospholipid metabolism. Catalyzes the transfer of an acyl group from acyl-phosphate (acyl-PO(4)) to glycerol-3-phosphate (G3P) to form lysophosphatidic acid (LPA). This enzyme utilizes acyl-phosphate as fatty acyl donor, but not acyl-CoA or acyl-ACP. The polypeptide is Glycerol-3-phosphate acyltransferase (Symbiobacterium thermophilum (strain DSM 24528 / JCM 14929 / IAM 14863 / T)).